We begin with the raw amino-acid sequence, 329 residues long: MSEAPAPVVTFKKGPSRRPAQSRQRRRSPSPLDPVAEASASASGSNVVRPERKSLANPLVQGTKRRRTNANNEEEEDGVGGGLDEFDYAAEGGLTRKGDELATRANDWDLEDVDGQGQRDKKVRLDEDGEIVTDDGLYRGASAYLPTINKTRETLDKKMKSGPIKATSHVRTITLMDYQPDVCKDYKETGFCGYGDSCKFLHDRGDYLAGWQLDKLPEEGVREVEEEDEEEEVPFACLICRQPFTQPVVTKCGHYFCMGCAAKRFQKSPKCYACGAPTQGIFNIADKVIAKIEARNKARREAREERAEQTGGGGIEIGGGSDEEGSDEE.

Residues 1–86 are disordered; the sequence is MSEAPAPVVT…DGVGGGLDEF (86 aa). The segment covering 72–86 has biased composition (acidic residues); it reads NEEEEDGVGGGLDEF. The segment at 177 to 205 adopts a C3H1-type zinc-finger fold; that stretch reads DYQPDVCKDYKETGFCGYGDSCKFLHDRG. The segment at 237–275 adopts an RING-type zinc-finger fold; that stretch reads CLICRQPFTQPVVTKCGHYFCMGCAAKRFQKSPKCYACG. Over residues 298–308 the composition is skewed to basic and acidic residues; the sequence is ARREAREERAE. The segment at 298–329 is disordered; sequence ARREAREERAEQTGGGGIEIGGGSDEEGSDEE. Residues 310–320 show a composition bias toward gly residues; it reads TGGGGIEIGGG.

Belongs to the CWC24 family. In terms of assembly, associated with the spliceosome.

Its subcellular location is the nucleus. Its function is as follows. Involved in pre-mRNA splicing. The sequence is that of Pre-mRNA-splicing factor CWC24 (CWC24) from Cryptococcus neoformans var. neoformans serotype D (strain B-3501A) (Filobasidiella neoformans).